Here is a 70-residue protein sequence, read N- to C-terminus: ATP synthase subunit c (70 aa).

A run of 2 helical transmembrane segments spans residues 4-24 (IAAA…NGLI) and 45-65 (IMFI…VIAF).

It belongs to the ATPase C chain family. F-type ATPases have 2 components, F(1) - the catalytic core - and F(0) - the membrane proton channel. F(1) has five subunits: alpha(3), beta(3), gamma(1), delta(1), epsilon(1). F(0) has three main subunits: a(1), b(2) and c(10-14). The alpha and beta chains form an alternating ring which encloses part of the gamma chain. F(1) is attached to F(0) by a central stalk formed by the gamma and epsilon chains, while a peripheral stalk is formed by the delta and b chains.

It localises to the cell membrane. In terms of biological role, f(1)F(0) ATP synthase produces ATP from ADP in the presence of a proton or sodium gradient. F-type ATPases consist of two structural domains, F(1) containing the extramembraneous catalytic core and F(0) containing the membrane proton channel, linked together by a central stalk and a peripheral stalk. During catalysis, ATP synthesis in the catalytic domain of F(1) is coupled via a rotary mechanism of the central stalk subunits to proton translocation. Its function is as follows. Key component of the F(0) channel; it plays a direct role in translocation across the membrane. A homomeric c-ring of between 10-14 subunits forms the central stalk rotor element with the F(1) delta and epsilon subunits. The polypeptide is ATP synthase subunit c (Staphylococcus aureus (strain Mu3 / ATCC 700698)).